The sequence spans 694 residues: MSDQEFGLDAIRNIGIMAHIDAGKTTTTERILFYAGRTHKIGEVHEGGATMDWMEQEQERGITITSAATTVFWLGSKINIIDTPGHVDFTIEVERSLRVLDGAVAVFDAVSGVEPQSETVWRQANKYGVPRVAFVNKMDRMGANYFGAVESMREKLGANAIPVHCPIGAESQFVGMVDLISQKALYFLDDSLGAKWEEREIPEDLQEQCEVLRMQLLEELATVDETNEAFMEKVLEAPESITEEEIHRVMRKGVIEGKINPVLCGSAFKNKGVQQLLDVIVKWLPSPLDRGNVRGMNLKTGEEVCLKPSKDGPLAALAFKIMTDPYVGRITFIRIYSGTLKKGSAILNSTKDKKERISRLLEMHANERTDRDEFTVGDIGACVGLKFSVTGDTLCDENQEIVLERIEAPEPVIDMAIEPKSKGDREKLAQALSALSEEDPTFRVSTNEETGQTIISGMGELHLDILRDRMIREFKVEANVGKPQVSYKETITKASDSETKYVKQSGGRGQYAHVCLEIEPNEPGKGNEVVSKIVGGVIPKEYIPAVIKGVEEGLNSGVLAGYGLVDVKVSIVFGSYHEVDSSEMAFKICGSMAVKEACRKALPVILEPIMKVTVITPEDHLGDVIGDLNRRRGKILGQEASRNMAQVNAEVPLSEMFGYMTSLRSLTSGRATSTMEPAFFAKVPQKIQEEIVKK.

One can recognise a tr-type G domain in the interval 9-288 (DAIRNIGIMA…VIVKWLPSPL (280 aa)). GTP-binding positions include 18–25 (AHIDAGKT), 82–86 (DTPGH), and 136–139 (NKMD).

This sequence belongs to the TRAFAC class translation factor GTPase superfamily. Classic translation factor GTPase family. EF-G/EF-2 subfamily.

The protein resides in the cytoplasm. Catalyzes the GTP-dependent ribosomal translocation step during translation elongation. During this step, the ribosome changes from the pre-translocational (PRE) to the post-translocational (POST) state as the newly formed A-site-bound peptidyl-tRNA and P-site-bound deacylated tRNA move to the P and E sites, respectively. Catalyzes the coordinated movement of the two tRNA molecules, the mRNA and conformational changes in the ribosome. In Chlamydia muridarum (strain MoPn / Nigg), this protein is Elongation factor G (fusA).